A 214-amino-acid polypeptide reads, in one-letter code: Melanoregulin (214 aa).

Positions 162–172 (LSERYLFVVDR) match the Cholesterol-binding sequence motif motif. A Phosphoserine modification is found at Ser213.

It belongs to the melanoregulin family. Identified in a complex with RILP and DCTN1; interacts directly with RILP, but does not interact directly with DCTN1. Interacts with PRPH2. Post-translationally, palmitoylated. Palmitoylation is required to maintain the protein at the melanosome membrane. In terms of tissue distribution, expressed in photoreceptor cells (at protein level).

Its subcellular location is the apical cell membrane. It is found in the melanosome membrane. The protein localises to the lysosome membrane. The protein resides in the cytoplasmic vesicle membrane. Functionally, probably functions as a cargo-recognition protein that couples cytoplasmic vesicles to the transport machinery. Plays a role in hair pigmentation, a process that involves shedding of melanosome-containing vesicles from melanocytes, followed by phagocytosis of the melanosome-containing vesicles by keratinocytes. Functions on melanosomes as receptor for RILP and the complex formed by RILP and DCTN1, and thereby contributes to retrograde melanosome transport from the cell periphery to the center. Overexpression causes accumulation of late endosomes and/or lysosomes at the microtubule organising center (MTOC) at the center of the cell. Probably binds cholesterol and requires the presence of cholesterol in membranes to function in microtubule-mediated retrograde organelle transport. Binds phosphatidylinositol 3-phosphate, phosphatidylinositol 4-phosphate, phosphatidylinositol 5-phosphate and phosphatidylinositol 3,5-bisphosphate, but not phosphatidylinositol 3,4-bisphosphate or phosphatidylinositol 4,5-bisphosphate. Required for normal phagosome clearing and normal activation of lysosomal enzymes in lysosomes from retinal pigment epithelium cells. Required for normal degradation of the lipofuscin component N-retinylidene-N-retinylethanolamine (A2E) in the eye. May function in membrane fusion and regulate the biogenesis of disk membranes of photoreceptor rod cells. In Homo sapiens (Human), this protein is Melanoregulin (MREG).